A 368-amino-acid polypeptide reads, in one-letter code: Ribosomal RNA large subunit methyltransferase M (368 aa).

S-adenosyl-L-methionine-binding positions include serine 189, 222 to 225, aspartate 241, aspartate 261, and aspartate 278; that span reads CPGG. The active-site Proton acceptor is the lysine 307.

Belongs to the class I-like SAM-binding methyltransferase superfamily. RNA methyltransferase RlmE family. RlmM subfamily. In terms of assembly, monomer.

It is found in the cytoplasm. The enzyme catalyses cytidine(2498) in 23S rRNA + S-adenosyl-L-methionine = 2'-O-methylcytidine(2498) in 23S rRNA + S-adenosyl-L-homocysteine + H(+). In terms of biological role, catalyzes the 2'-O-methylation at nucleotide C2498 in 23S rRNA. The polypeptide is Ribosomal RNA large subunit methyltransferase M (Yersinia pseudotuberculosis serotype O:1b (strain IP 31758)).